We begin with the raw amino-acid sequence, 231 residues long: 5'-methylthioadenosine/S-adenosylhomocysteine nucleosidase (231 aa).

Glutamate 12 (proton acceptor) is an active-site residue. Residues glycine 78, isoleucine 153, and 174–175 (ME) each bind substrate. The active-site Proton donor is the aspartate 198.

The protein belongs to the PNP/UDP phosphorylase family. MtnN subfamily.

It catalyses the reaction S-adenosyl-L-homocysteine + H2O = S-(5-deoxy-D-ribos-5-yl)-L-homocysteine + adenine. It carries out the reaction S-methyl-5'-thioadenosine + H2O = 5-(methylsulfanyl)-D-ribose + adenine. The catalysed reaction is 5'-deoxyadenosine + H2O = 5-deoxy-D-ribose + adenine. It participates in amino-acid biosynthesis; L-methionine biosynthesis via salvage pathway; S-methyl-5-thio-alpha-D-ribose 1-phosphate from S-methyl-5'-thioadenosine (hydrolase route): step 1/2. Catalyzes the irreversible cleavage of the glycosidic bond in both 5'-methylthioadenosine (MTA) and S-adenosylhomocysteine (SAH/AdoHcy) to adenine and the corresponding thioribose, 5'-methylthioribose and S-ribosylhomocysteine, respectively. Also cleaves 5'-deoxyadenosine, a toxic by-product of radical S-adenosylmethionine (SAM) enzymes, into 5-deoxyribose and adenine. This chain is 5'-methylthioadenosine/S-adenosylhomocysteine nucleosidase, found in Shewanella sp. (strain W3-18-1).